The sequence spans 391 residues: Pyoverdine export membrane fusion protein PvdR (391 aa).

An N-terminal signal peptide occupies residues 1–24; it reads MRRTRSTRRALLVAVCLSPLIALA. A coiled-coil region spans residues 108–180; it reads IEMLKAQLAE…QASLRSDEAE (73 aa). The disordered stretch occupies residues 263 to 289; that stretch reads LPVPPKPLDQSNQGGGSPTSGSGGQSG. A compositionally biased stretch (gly residues) spans 275 to 289; it reads QGGGSPTSGSGGQSG.

The protein belongs to the membrane fusion protein (MFP) (TC 8.A.1) family. As to quaternary structure, part of the tripartite efflux system PvdRT-OpmQ, which is composed of an inner membrane component with both ATPase and permease domains, PvdT, a periplasmic membrane fusion protein, PvdR, and an outer membrane component, OpmQ.

It localises to the periplasm. Part of the tripartite efflux system PvdRT-OpmQ required for the secretion into the extracellular milieu of the siderophore pyoverdine (PVD), which is involved in iron acquisition. This subunit is an adapter protein that stimulates the ATPase activity of PvdT and connects the inner and outer membrane components. The system is responsible for export of newly synthesized PVD after the final steps of biosynthesis have taken place in the periplasm. It is also responsible for recycling of PVD after internalization of ferri-PVD into the periplasm by the outer-membrane receptor FpvA and release of iron from PVD, thus making PVD available for new cycles of iron uptake. In addition, can expel unwanted metals complexed with PVD from the periplasm into the extracellular medium. Does not contribute to resistance to antibiotics belonging to the classes of tetracyclines, aminoglycosides, beta-lactams and macrolides, and chloramphenicol. This is Pyoverdine export membrane fusion protein PvdR from Pseudomonas aeruginosa (strain ATCC 15692 / DSM 22644 / CIP 104116 / JCM 14847 / LMG 12228 / 1C / PRS 101 / PAO1).